The primary structure comprises 856 residues: Glucans biosynthesis glucosyltransferase H (856 aa).

A run of 6 helical transmembrane segments spans residues Ile-144–Met-164, Ile-198–Met-218, Val-517–Leu-537, Leu-574–Trp-594, Thr-608–Phe-628, and Ile-691–Gly-711.

This sequence belongs to the glycosyltransferase 2 family. OpgH subfamily.

The protein localises to the cell inner membrane. It participates in glycan metabolism; osmoregulated periplasmic glucan (OPG) biosynthesis. Functionally, involved in the biosynthesis of osmoregulated periplasmic glucans (OPGs). The sequence is that of Glucans biosynthesis glucosyltransferase H from Pseudomonas fluorescens (strain Pf0-1).